We begin with the raw amino-acid sequence, 288 residues long: Probable ketoamine kinase VP1481 (288 aa).

92–94 (NYL) is a binding site for ATP. The Proton acceptor role is filled by Asp195.

Belongs to the fructosamine kinase family.

Functionally, ketoamine kinase that phosphorylates ketoamines on the third carbon of the sugar moiety to generate ketoamine 3-phosphate. The chain is Probable ketoamine kinase VP1481 from Vibrio parahaemolyticus serotype O3:K6 (strain RIMD 2210633).